We begin with the raw amino-acid sequence, 280 residues long: Fe-S cluster assembly protein DRE2 (280 aa).

The tract at residues 1 to 121 (MSNLLVFDNS…TTLLKKSGGG (121 aa)) is N-terminal SAM-like domain. Residues 122-176 (PKKFAFKRASPATAAPSTNGTNPAATVNLNSVVTLSMDDDDLMDEDDLMEDDTNL) are linker. Residues Cys186, Cys198, Cys201, and Cys203 each coordinate [2Fe-2S] cluster. The fe-S binding site A stretch occupies residues 186–203 (CDPGPGKKRRKACKDCTC). Residues Cys244, Cys247, Cys255, and Cys258 each coordinate [4Fe-4S] cluster. 2 consecutive short sequence motifs (cx2C motif) follow at residues 244–247 (CGSC) and 255–258 (CDGC). The segment at 244 to 258 (CGSCALGDAFRCDGC) is fe-S binding site B.

This sequence belongs to the anamorsin family. In terms of assembly, monomer. Interacts with TAH18. Interacts with MIA40. Requires [2Fe-2S] cluster as cofactor. [4Fe-4S] cluster is required as a cofactor.

Its subcellular location is the cytoplasm. The protein resides in the mitochondrion intermembrane space. Functionally, component of the cytosolic iron-sulfur (Fe-S) protein assembly (CIA) machinery required for the maturation of extramitochondrial Fe-S proteins. Part of an electron transfer chain functioning in an early step of cytosolic Fe-S biogenesis, facilitating the de novo assembly of a [4Fe-4S] cluster on the scaffold complex CFD1-NBP35. Electrons are transferred to DRE2 from NADPH via the FAD- and FMN-containing protein TAH18. TAH18-DRE2 are also required for the assembly of the diferric tyrosyl radical cofactor of ribonucleotide reductase (RNR), probably by providing electrons for reduction during radical cofactor maturation in the catalytic small subunit RNR2. The sequence is that of Fe-S cluster assembly protein DRE2 from Yarrowia lipolytica (strain CLIB 122 / E 150) (Yeast).